A 301-amino-acid chain; its full sequence is tRNA U34 carboxymethyltransferase (301 aa).

Carboxy-S-adenosyl-L-methionine-binding positions include Lys-70, Trp-84, Lys-89, Gly-108, 130 to 132, 157 to 158, Tyr-177, and Arg-292; these read DPS and VE.

Belongs to the class I-like SAM-binding methyltransferase superfamily. CmoB family. As to quaternary structure, homotetramer.

The enzyme catalyses carboxy-S-adenosyl-L-methionine + 5-hydroxyuridine(34) in tRNA = 5-carboxymethoxyuridine(34) in tRNA + S-adenosyl-L-homocysteine + H(+). Functionally, catalyzes carboxymethyl transfer from carboxy-S-adenosyl-L-methionine (Cx-SAM) to 5-hydroxyuridine (ho5U) to form 5-carboxymethoxyuridine (cmo5U) at position 34 in tRNAs. This Sulfurovum sp. (strain NBC37-1) protein is tRNA U34 carboxymethyltransferase.